We begin with the raw amino-acid sequence, 585 residues long: MRSHYCGALNRSHIGQQVILSGWVHKRRDLGGLIFIDMRDREGIVQVCFDPKYQEALTEASALRNEFCIKIEGEVIARPDNQINKNMATGEVEVVAKALSVYNVSDVLPLDFNQNNTEEQRLKYRYLDLRRPEMAQHLKTRAKITAFVRRYMDENGFLDIETPMLTKATPEGARDYLVPSRVHKGKFYALPQSPQLFKQLLMMSGFDRYYQIVKCFRDEDLRADRQPEFTQIDVETSFMTAPEVREIMEKMVHGLWLNTIGVDLGKFPTMTWQEAMERFGSDKPDLRNPLEIVDVADIVKDIDFNVFSDPANSSNGRVAVIRVPNGINITRKQIDEYTQFVGIYGAKGLAWVKINDINAGLEGVQSPIAKFLTTEKIKAIFDRTSAQSGDILFFGADKWQTATDAMGALRLKLGRDLGLTHLDEWKPLWVIDFPMFERDEEGNLAAMHHPFTSPKDFTPEQLEANPTSAVANAYDMVINGYEVGGGSVRIFDPKMQQTVFHILGIDEDQQREKFGFLLDALKFGTPPHAGLAFGLDRLTMLLTGTDNIRDVIAFPKTTAAACLMTDAPSLANEKALEELAIKTIM.

An L-aspartate-binding site is contributed by Glu-171. The interval 195–198 (QLFK) is aspartate. Arg-217 contributes to the L-aspartate binding site. ATP is bound by residues 217-219 (RDE) and Gln-226. An L-aspartate-binding site is contributed by His-448. Glu-482 lines the ATP pocket. Arg-489 is a binding site for L-aspartate. 534–537 (GLDR) is an ATP binding site.

This sequence belongs to the class-II aminoacyl-tRNA synthetase family. Type 1 subfamily. In terms of assembly, homodimer.

It localises to the cytoplasm. It carries out the reaction tRNA(Asp) + L-aspartate + ATP = L-aspartyl-tRNA(Asp) + AMP + diphosphate. Functionally, catalyzes the attachment of L-aspartate to tRNA(Asp) in a two-step reaction: L-aspartate is first activated by ATP to form Asp-AMP and then transferred to the acceptor end of tRNA(Asp). The protein is Aspartate--tRNA ligase of Histophilus somni (strain 129Pt) (Haemophilus somnus).